The sequence spans 88 residues: Eclosion hormone (88 aa).

Positions 1–26 (MAGKVTVAFFMFAMIAFLANFGYVEC) are cleaved as a signal peptide. 3 disulfide bridges follow: Cys40–Cys64, Cys44–Cys60, and Cys47–Cys75.

This sequence belongs to the insect eclosion hormone family.

The protein resides in the secreted. In terms of biological role, neuropeptide that triggers the performance of ecdysis behaviors at the end of a molt. It triggers adult behavior patterns: larval, pupal and adult ecdysis, and plasticization during the molt. The polypeptide is Eclosion hormone (Manduca sexta (Tobacco hawkmoth)).